Here is a 399-residue protein sequence, read N- to C-terminus: Digeranylgeranylglycerophospholipid reductase (399 aa).

FAD contacts are provided by Gly-15, Glu-34, Cys-45, Ala-46, Gly-48, Arg-99, Ala-123, Asp-280, Gly-292, and Ile-293.

It belongs to the geranylgeranyl reductase family. DGGGPL reductase subfamily. Requires FAD as cofactor.

The catalysed reaction is a 2,3-bis-O-phytanyl-sn-glycerol 1-phospholipid + 8 oxidized 2[4Fe-4S]-[ferredoxin] = a 2,3-bis-O-(geranylgeranyl)-sn-glycerol 1-phospholipid + 8 reduced 2[4Fe-4S]-[ferredoxin] + 16 H(+). The enzyme catalyses 2,3-bis-O-(phytanyl)-sn-glycerol 1-phosphate + 8 oxidized 2[4Fe-4S]-[ferredoxin] = 2,3-bis-O-(geranylgeranyl)-sn-glycerol 1-phosphate + 8 reduced 2[4Fe-4S]-[ferredoxin] + 16 H(+). It carries out the reaction a 2,3-bis-O-phytanyl-sn-glycerol 1-phospholipid + 8 A = a 2,3-bis-O-(geranylgeranyl)-sn-glycerol 1-phospholipid + 8 AH2. It catalyses the reaction CDP-2,3-bis-O-(geranylgeranyl)-sn-glycerol + 8 AH2 = CDP-2,3-bis-O-(phytanyl)-sn-glycerol + 8 A. The catalysed reaction is archaetidylserine + 8 AH2 = 2,3-bis-O-phytanyl-sn-glycero-3-phospho-L-serine + 8 A. Its pathway is membrane lipid metabolism; glycerophospholipid metabolism. Its function is as follows. Is involved in the reduction of 2,3-digeranylgeranylglycerophospholipids (unsaturated archaeols) into 2,3-diphytanylglycerophospholipids (saturated archaeols) in the biosynthesis of archaeal membrane lipids. Catalyzes the formation of archaetidic acid (2,3-di-O-phytanyl-sn-glyceryl phosphate) from 2,3-di-O-geranylgeranylglyceryl phosphate (DGGGP) via the hydrogenation of each double bond of the isoprenoid chains. Is also probably able to reduce double bonds of geranyl groups in CDP-2,3-bis-O-(geranylgeranyl)-sn-glycerol and archaetidylserine, thus acting at various stages in the biosynthesis of archaeal membrane lipids. This Methanosphaerula palustris (strain ATCC BAA-1556 / DSM 19958 / E1-9c) protein is Digeranylgeranylglycerophospholipid reductase.